The following is a 177-amino-acid chain: Large ribosomal subunit protein uL6 (177 aa).

It belongs to the universal ribosomal protein uL6 family. As to quaternary structure, part of the 50S ribosomal subunit.

Functionally, this protein binds to the 23S rRNA, and is important in its secondary structure. It is located near the subunit interface in the base of the L7/L12 stalk, and near the tRNA binding site of the peptidyltransferase center. This chain is Large ribosomal subunit protein uL6, found in Azoarcus sp. (strain BH72).